The sequence spans 529 residues: Bifunctional purine biosynthesis protein PurH (529 aa).

The 148-residue stretch at 1 to 148 (MQQRRPIRRA…KNHKDVAIVV (148 aa)) folds into the MGS-like domain.

The protein belongs to the PurH family.

It carries out the reaction (6R)-10-formyltetrahydrofolate + 5-amino-1-(5-phospho-beta-D-ribosyl)imidazole-4-carboxamide = 5-formamido-1-(5-phospho-D-ribosyl)imidazole-4-carboxamide + (6S)-5,6,7,8-tetrahydrofolate. It catalyses the reaction IMP + H2O = 5-formamido-1-(5-phospho-D-ribosyl)imidazole-4-carboxamide. It functions in the pathway purine metabolism; IMP biosynthesis via de novo pathway; 5-formamido-1-(5-phospho-D-ribosyl)imidazole-4-carboxamide from 5-amino-1-(5-phospho-D-ribosyl)imidazole-4-carboxamide (10-formyl THF route): step 1/1. It participates in purine metabolism; IMP biosynthesis via de novo pathway; IMP from 5-formamido-1-(5-phospho-D-ribosyl)imidazole-4-carboxamide: step 1/1. The polypeptide is Bifunctional purine biosynthesis protein PurH (Yersinia pseudotuberculosis serotype IB (strain PB1/+)).